We begin with the raw amino-acid sequence, 374 residues long: Flap endonuclease 1 (374 aa).

Positions Met1 to Arg105 are N-domain. Mg(2+) is bound at residue Asp34. Residues Arg47 and Arg71 each contribute to the DNA site. Residues Asp87, Glu159, Glu161, Asp180, and Asp182 each coordinate Mg(2+). Positions Asp123–His254 are I-domain. Residue Glu159 coordinates DNA. 2 residues coordinate DNA: Gly232 and Asp234. Asp234 contacts Mg(2+). Residues Val339 to Phe347 are interaction with PCNA. Residues Asp353 to Lys374 form a disordered region.

Belongs to the XPG/RAD2 endonuclease family. FEN1 subfamily. Interacts with PCNA. Three molecules of RAD27 bind to one PCNA trimer with each molecule binding to one PCNA monomer. PCNA stimulates the nuclease activity without altering cleavage specificity. Mg(2+) is required as a cofactor. Phosphorylated. Phosphorylation upon DNA damage induces relocalization to the nuclear plasma.

It localises to the nucleus. The protein localises to the nucleolus. It is found in the nucleoplasm. Its subcellular location is the mitochondrion. Functionally, structure-specific nuclease with 5'-flap endonuclease and 5'-3' exonuclease activities involved in DNA replication and repair. During DNA replication, cleaves the 5'-overhanging flap structure that is generated by displacement synthesis when DNA polymerase encounters the 5'-end of a downstream Okazaki fragment. It enters the flap from the 5'-end and then tracks to cleave the flap base, leaving a nick for ligation. Also involved in the long patch base excision repair (LP-BER) pathway, by cleaving within the apurinic/apyrimidinic (AP) site-terminated flap. Acts as a genome stabilization factor that prevents flaps from equilibrating into structures that lead to duplications and deletions. Also possesses 5'-3' exonuclease activity on nicked or gapped double-stranded DNA, and exhibits RNase H activity. Also involved in replication and repair of rDNA and in repairing mitochondrial DNA. The chain is Flap endonuclease 1 from Candida tropicalis (strain ATCC MYA-3404 / T1) (Yeast).